The following is a 257-amino-acid chain: Uracil phosphoribosyltransferase (257 aa).

5-phospho-alpha-D-ribose 1-diphosphate contacts are provided by residues R77, R102, and 129-137; that span reads DPMLATGGS. Uracil-binding positions include I192 and 197 to 199; that span reads GDA. D198 lines the 5-phospho-alpha-D-ribose 1-diphosphate pocket. The segment at 203–257 is disordered; sequence QFGPNLFTSSAPSRPEAPAGRGRAAAKTPGRRSARSESPSSTSPSARSRKAAPPA. 2 stretches are compositionally biased toward low complexity: residues 211-230 and 238-248; these read SSAPSRPEAPAGRGRAAAKT and SESPSSTSPSA.

The protein belongs to the UPRTase family. Mg(2+) serves as cofactor.

The enzyme catalyses UMP + diphosphate = 5-phospho-alpha-D-ribose 1-diphosphate + uracil. It functions in the pathway pyrimidine metabolism; UMP biosynthesis via salvage pathway; UMP from uracil: step 1/1. Allosterically activated by GTP. In terms of biological role, catalyzes the conversion of uracil and 5-phospho-alpha-D-ribose 1-diphosphate (PRPP) to UMP and diphosphate. In Mycolicibacterium paratuberculosis (strain ATCC BAA-968 / K-10) (Mycobacterium paratuberculosis), this protein is Uracil phosphoribosyltransferase.